Consider the following 380-residue polypeptide: Histidinol-phosphate aminotransferase (380 aa).

K235 carries the post-translational modification N6-(pyridoxal phosphate)lysine.

This sequence belongs to the class-II pyridoxal-phosphate-dependent aminotransferase family. Histidinol-phosphate aminotransferase subfamily. In terms of assembly, homodimer. It depends on pyridoxal 5'-phosphate as a cofactor.

The catalysed reaction is L-histidinol phosphate + 2-oxoglutarate = 3-(imidazol-4-yl)-2-oxopropyl phosphate + L-glutamate. Its pathway is amino-acid biosynthesis; L-histidine biosynthesis; L-histidine from 5-phospho-alpha-D-ribose 1-diphosphate: step 7/9. This Rhodococcus opacus (strain B4) protein is Histidinol-phosphate aminotransferase.